Consider the following 269-residue polypeptide: Tryptophan synthase alpha chain (269 aa).

Catalysis depends on proton acceptor residues E56 and D67.

The protein belongs to the TrpA family. In terms of assembly, tetramer of two alpha and two beta chains.

The catalysed reaction is (1S,2R)-1-C-(indol-3-yl)glycerol 3-phosphate + L-serine = D-glyceraldehyde 3-phosphate + L-tryptophan + H2O. It functions in the pathway amino-acid biosynthesis; L-tryptophan biosynthesis; L-tryptophan from chorismate: step 5/5. The alpha subunit is responsible for the aldol cleavage of indoleglycerol phosphate to indole and glyceraldehyde 3-phosphate. This Mycobacterium marinum (strain ATCC BAA-535 / M) protein is Tryptophan synthase alpha chain.